Reading from the N-terminus, the 422-residue chain is Glutamate-1-semialdehyde 2,1-aminomutase (422 aa).

K258 carries the post-translational modification N6-(pyridoxal phosphate)lysine.

Belongs to the class-III pyridoxal-phosphate-dependent aminotransferase family. HemL subfamily. As to quaternary structure, homodimer. It depends on pyridoxal 5'-phosphate as a cofactor.

The protein resides in the cytoplasm. The enzyme catalyses (S)-4-amino-5-oxopentanoate = 5-aminolevulinate. Its pathway is porphyrin-containing compound metabolism; protoporphyrin-IX biosynthesis; 5-aminolevulinate from L-glutamyl-tRNA(Glu): step 2/2. This is Glutamate-1-semialdehyde 2,1-aminomutase from Chlamydia muridarum (strain MoPn / Nigg).